The chain runs to 162 residues: NADH-quinone oxidoreductase subunit I (162 aa).

2 4Fe-4S ferredoxin-type domains span residues 54 to 83 (RRYE…IESE) and 93 to 122 (TRYD…ETQI). Positions 63, 66, 69, 73, 102, 105, 108, and 112 each coordinate [4Fe-4S] cluster.

This sequence belongs to the complex I 23 kDa subunit family. In terms of assembly, NDH-1 is composed of 14 different subunits. Subunits NuoA, H, J, K, L, M, N constitute the membrane sector of the complex. Requires [4Fe-4S] cluster as cofactor.

The protein localises to the cell inner membrane. It carries out the reaction a quinone + NADH + 5 H(+)(in) = a quinol + NAD(+) + 4 H(+)(out). Functionally, NDH-1 shuttles electrons from NADH, via FMN and iron-sulfur (Fe-S) centers, to quinones in the respiratory chain. The immediate electron acceptor for the enzyme in this species is believed to be ubiquinone. Couples the redox reaction to proton translocation (for every two electrons transferred, four hydrogen ions are translocated across the cytoplasmic membrane), and thus conserves the redox energy in a proton gradient. The protein is NADH-quinone oxidoreductase subunit I of Burkholderia mallei (strain NCTC 10247).